The following is a 175-amino-acid chain: Putative lipoprotein LppN (175 aa).

An N-terminal signal peptide occupies residues 1–20 (MRLPGRHVLYALSAVTMLAA). Cysteine 21 carries the N-palmitoyl cysteine lipid modification. Residue cysteine 21 is the site of S-diacylglycerol cysteine attachment. The interval 31–56 (ASTNMNPTNPPATAETATVSPTPAPQ) is disordered. The span at 33–48 (TNMNPTNPPATAETAT) shows a compositional bias: low complexity. Prevents bacterial uptake by a human macrophage-like cell line stretches follow at residues 61 to 80 (ETWI…PADL), 101 to 120 (RAPV…DCAA), and 121 to 140 (GFAP…VAYL).

The protein localises to the cell membrane. It is found in the cell surface. Probably involved in bacterial recognition and uptake by its host (human). In Mycobacterium tuberculosis (strain ATCC 25618 / H37Rv), this protein is Putative lipoprotein LppN (lppN).